The sequence spans 96 residues: Myticin-A (96 aa).

Positions 1 to 20 (MKATILLAVLVAVFVAGTEA) are cleaved as a signal peptide. Residues 61–96 (VNNPFRVNQVAKSINDLDYTPIMKSMENLDNGMDML) constitute a propeptide, removed in mature form.

Post-translationally, contains four disulfide bonds. Hemocytes.

The protein resides in the secreted. Functionally, bacteriolytic activity against Gram-positive bacteria M.luteus, B.megaterium and A.viridans. The protein is Myticin-A of Mytilus galloprovincialis (Mediterranean mussel).